Reading from the N-terminus, the 266-residue chain is GRIP and coiled-coil domain-containing protein C365.11 (266 aa).

Polar residues predominate over residues 1-13 (METTVSAKNSLEN). The disordered stretch occupies residues 1 to 88 (METTVSAKNS…LDEKVKELEN (88 aa)). The residue at position 10 (Ser-10) is a Phosphoserine. The span at 36–49 (ASKKKRKNRKKKKN) shows a compositional bias: basic residues. Residues 63-88 (EEQRSGSIDSKDKEKPLDEKVKELEN) are compositionally biased toward basic and acidic residues. Residues 73 to 188 (KDKEKPLDEK…ESVKSHESEL (116 aa)) are a coiled coil. Phosphoserine is present on residues Ser-202 and Ser-204. Residues 216 to 264 (ISKELINKEYARNVLLQFLENHEHRDKILPILSTALDLEEVHQHLILKN) form the GRIP domain.

It localises to the cytoplasm. The chain is GRIP and coiled-coil domain-containing protein C365.11 from Schizosaccharomyces pombe (strain 972 / ATCC 24843) (Fission yeast).